The primary structure comprises 188 residues: Large ribosomal subunit protein uL5 (188 aa).

It belongs to the universal ribosomal protein uL5 family. As to quaternary structure, part of the 50S ribosomal subunit; part of the 5S rRNA/L5/L18/L25 subcomplex. Contacts the 5S rRNA and the P site tRNA. Forms a bridge to the 30S subunit in the 70S ribosome.

Its function is as follows. This is one of the proteins that bind and probably mediate the attachment of the 5S RNA into the large ribosomal subunit, where it forms part of the central protuberance. In the 70S ribosome it contacts protein S13 of the 30S subunit (bridge B1b), connecting the 2 subunits; this bridge is implicated in subunit movement. Contacts the P site tRNA; the 5S rRNA and some of its associated proteins might help stabilize positioning of ribosome-bound tRNAs. The polypeptide is Large ribosomal subunit protein uL5 (Aquifex aeolicus (strain VF5)).